Here is a 424-residue protein sequence, read N- to C-terminus: MGFNIPRGTQDILPGESERWQYVEKIARETCHAYQYKEIRTPIFEHTELFSRGVGESTDIVQKEMYTFADKKGRSLTLRPEGTASAVRSFVENKLFANPVQPTKLYYIGPMFRYERPQTGRYRQFYQFGIEAIGSNDPAIDAEVIALAMSVYRKAGLSNLKLVINSLGDKESRTAHREALIRHFEPRIDEFCSDCQKRLRQNPLRILDCKKDRDHELLKTAPSILDYLNEESKAYFAKVQQYLTDIGIAFEVDPNLVRGLDYYNHTAFEIMSNAEGFGAITTLAGGGRYDGLTEEFGGPKAPGIGFAMSIERLLAALDAENVKVGADEGIDCYIVTLGDKAKDYSVSLLYKLREAGISAEIDYEQKKMKGQFKSADRLNAKYIAVLGEDELNQNQINVKDGKTGDQQAIGLDDFIRFLKTNTES.

The protein belongs to the class-II aminoacyl-tRNA synthetase family. In terms of assembly, homodimer.

The protein localises to the cytoplasm. It carries out the reaction tRNA(His) + L-histidine + ATP = L-histidyl-tRNA(His) + AMP + diphosphate + H(+). This Bacillus licheniformis (strain ATCC 14580 / DSM 13 / JCM 2505 / CCUG 7422 / NBRC 12200 / NCIMB 9375 / NCTC 10341 / NRRL NRS-1264 / Gibson 46) protein is Histidine--tRNA ligase.